Consider the following 491-residue polypeptide: Chromosomal replication initiator protein DnaA (491 aa).

Positions 1-69 are domain I, interacts with DnaA modulators; the sequence is MTTWDKCLKK…TIQECHGNDL (69 aa). Residues 69 to 154 are domain II; the sequence is LIIEYSNKKF…KEDEEYSFGL (86 aa). Residues 155–371 form a domain III, AAA+ region region; that stretch reads PLKEKYVFDS…GALNRVLTTS (217 aa). Positions 199, 201, 202, and 203 each coordinate ATP. The tract at residues 372 to 491 is domain IV, binds dsDNA; the sequence is KFNHKDPTIE…YELLLDKISR (120 aa).

Belongs to the DnaA family. As to quaternary structure, oligomerizes as a right-handed, spiral filament on DNA at oriC.

The protein resides in the cytoplasm. Plays an essential role in the initiation and regulation of chromosomal replication. ATP-DnaA binds to the origin of replication (oriC) to initiate formation of the DNA replication initiation complex once per cell cycle. Binds the DnaA box (a 9 base pair repeat at the origin) and separates the double-stranded (ds)DNA. Forms a right-handed helical filament on oriC DNA; dsDNA binds to the exterior of the filament while single-stranded (ss)DNA is stabiized in the filament's interior. The ATP-DnaA-oriC complex binds and stabilizes one strand of the AT-rich DNA unwinding element (DUE), permitting loading of DNA polymerase. After initiation quickly degrades to an ADP-DnaA complex that is not apt for DNA replication. Binds acidic phospholipids. In Francisella tularensis subsp. holarctica (strain FTNF002-00 / FTA), this protein is Chromosomal replication initiator protein DnaA.